We begin with the raw amino-acid sequence, 63 residues long: Large ribosomal subunit protein uL29 (63 aa).

The protein belongs to the universal ribosomal protein uL29 family.

In Idiomarina loihiensis (strain ATCC BAA-735 / DSM 15497 / L2-TR), this protein is Large ribosomal subunit protein uL29.